Consider the following 1892-residue polypeptide: Alpha-2-macroglobulin (1892 aa).

The first 23 residues, 1-23, serve as a signal peptide directing secretion; that stretch reads MKNIFRKFVFTIFVCLINLQLIA. Positions 1441-1444 form a cross-link, isoglutamyl cysteine thioester (Cys-Gln); it reads CTEQ.

It belongs to the protease inhibitor I39 (alpha-2-macroglobulin) family. Bacterial alpha-2-macroglobulin subfamily.

Its function is as follows. Protects the bacterial cell from host peptidases. This Rickettsia conorii (strain ATCC VR-613 / Malish 7) protein is Alpha-2-macroglobulin.